We begin with the raw amino-acid sequence, 231 residues long: Protein RhiA (231 aa).

Functionally, may be involved in plant-microbe interaction. The sequence is that of Protein RhiA (rhiA) from Rhizobium leguminosarum bv. viciae.